The primary structure comprises 222 residues: Vespryn (222 aa).

Residues 1 to 44 (MSPSAGLQFSLYFLQTKKVLWKLTDKEKGLCYILLFTLCFFADQ) form the signal peptide. A propeptide spanning residues 45 to 52 (ENGGKALA) is cleaved from the precursor. Residues 53 to 159 (SPPGIWKRAD…RIWQMGLWWL (107 aa)) enclose the B30.2/SPRY domain. Residues 160-222 (RHLETDPGRV…LGGTVSLTTL (63 aa)) constitute a propeptide that is removed on maturation. An N-linked (GlcNAc...) asparagine glycan is attached at Asn-195.

Belongs to the ohanin/vespryn family. As to expression, expressed by the venom gland.

It localises to the secreted. In terms of biological role, neurotoxin that produces dose-dependent hypolocomotion and hyperalgesia in mice. May directly act on the central nervous system, as it is 6500-fold more potent when administered intracerebroventricularly than intraperitoneal. This Crotalus adamanteus (Eastern diamondback rattlesnake) protein is Vespryn.